The primary structure comprises 337 residues: N-acetyl-gamma-glutamyl-phosphate reductase (337 aa).

Cys149 is a catalytic residue.

It belongs to the NAGSA dehydrogenase family. Type 1 subfamily.

Its subcellular location is the cytoplasm. The catalysed reaction is N-acetyl-L-glutamate 5-semialdehyde + phosphate + NADP(+) = N-acetyl-L-glutamyl 5-phosphate + NADPH + H(+). Its pathway is amino-acid biosynthesis; L-arginine biosynthesis; N(2)-acetyl-L-ornithine from L-glutamate: step 3/4. Functionally, catalyzes the NADPH-dependent reduction of N-acetyl-5-glutamyl phosphate to yield N-acetyl-L-glutamate 5-semialdehyde. This chain is N-acetyl-gamma-glutamyl-phosphate reductase, found in Wolinella succinogenes (strain ATCC 29543 / DSM 1740 / CCUG 13145 / JCM 31913 / LMG 7466 / NCTC 11488 / FDC 602W) (Vibrio succinogenes).